We begin with the raw amino-acid sequence, 525 residues long: AP-4 complex accessory subunit Tepsin (525 aa).

Positions 8-141 (RDRLSFLHRL…FSDTVLPLAP (134 aa)) constitute an ENTH domain. Positions 139–229 (LAPSQPLGTP…SHSGASREPG (91 aa)) are disordered. The span at 193 to 225 (SGPSSQNSSQNSDLSRVSDSGSHSGSDSHSGAS) shows a compositional bias: low complexity. A phosphoserine mark is found at serine 333 and serine 356. The segment at 355–465 (LSPARGTSAE…PKRGPSSCAW (111 aa)) is disordered. The segment covering 393 to 412 (PLSSTPVSSRSPAPSSGMPS) has biased composition (low complexity). Over residues 413 to 429 (SPVPTPPPDASPIPAPG) the composition is skewed to pro residues. The span at 434–448 (AEARLAESRRWRPER) shows a compositional bias: basic and acidic residues. The interaction with AP4B1 stretch occupies residues 467–477 (RDSLFAGMELV). Positions 487-525 (AAAGESCPDAPRAPQTSSQRTAAKEPPGSEPSAFAFLNA) are disordered. The tract at residues 515 to 525 (SEPSAFAFLNA) is interaction with AP4E1.

As to quaternary structure, interacts with AP4B1 and AP4E1; the interaction is direct and mediates the association of TEPSIN with the adapter-like complex 4 (AP-4), a heterotetramer composed of AP4B1, AP4E1, AP4M1 and AP4S1.

It is found in the golgi apparatus. Its subcellular location is the trans-Golgi network membrane. The protein resides in the cytoplasmic vesicle. The protein localises to the cytoplasm. It localises to the cytosol. Functionally, associates with the adapter-like complex 4 (AP-4) and may therefore play a role in vesicular trafficking of proteins at the trans-Golgi network. The polypeptide is AP-4 complex accessory subunit Tepsin (Homo sapiens (Human)).